We begin with the raw amino-acid sequence, 214 residues long: Endosomal/vacuolar adapter protein YPT35 (214 aa).

A disordered region spans residues 1–63; sequence MNDKISFLPP…ATITRTRPRR (63 aa). The PxP motif lies at 5–15; it reads ISFLPPEPIQL. The segment covering 16 to 31 has biased composition (acidic residues); the sequence is LDEDSTEPELDIDSQQ. A compositionally biased stretch (low complexity) spans 38–58; that stretch reads SASNSNDSTSHSNDCGATITR. Ser65 and Ser66 each carry phosphoserine. Residues 73–213 enclose the PX domain; the sequence is FQKAHVSDCT…IQFLEPSKRV (141 aa).

Belongs to the YPT35 family. In terms of assembly, interacts with RBD2, YIF1, YIP1 and YIP4.

The protein localises to the endosome membrane. It localises to the vacuole membrane. Functionally, recruits the lipid transfer protein VPS13 to endosomal and vacuolar membranes. The protein is Endosomal/vacuolar adapter protein YPT35 (YPT35) of Saccharomyces cerevisiae (strain YJM789) (Baker's yeast).